A 513-amino-acid polypeptide reads, in one-letter code: Probable DNA ligase (513 aa).

Residue Glu-213 participates in ATP binding. The N6-AMP-lysine intermediate role is filled by Lys-215. 6 residues coordinate ATP: Arg-220, Arg-235, Glu-264, Phe-304, Arg-376, and Lys-382.

Belongs to the ATP-dependent DNA ligase family. Requires Mg(2+) as cofactor.

The enzyme catalyses ATP + (deoxyribonucleotide)n-3'-hydroxyl + 5'-phospho-(deoxyribonucleotide)m = (deoxyribonucleotide)n+m + AMP + diphosphate.. In terms of biological role, DNA ligase that seals nicks in double-stranded DNA during DNA replication, DNA recombination and DNA repair. The chain is Probable DNA ligase from Anaeromyxobacter sp. (strain K).